The sequence spans 448 residues: Phosphoglucosamine mutase (448 aa).

Residue serine 100 is the Phosphoserine intermediate of the active site. Mg(2+) is bound by residues serine 100, aspartate 240, aspartate 242, and aspartate 244. Serine 100 carries the phosphoserine modification.

This sequence belongs to the phosphohexose mutase family. Requires Mg(2+) as cofactor. In terms of processing, activated by phosphorylation.

The enzyme catalyses alpha-D-glucosamine 1-phosphate = D-glucosamine 6-phosphate. In terms of biological role, catalyzes the conversion of glucosamine-6-phosphate to glucosamine-1-phosphate. The sequence is that of Phosphoglucosamine mutase from Bacillus licheniformis (strain ATCC 14580 / DSM 13 / JCM 2505 / CCUG 7422 / NBRC 12200 / NCIMB 9375 / NCTC 10341 / NRRL NRS-1264 / Gibson 46).